A 104-amino-acid polypeptide reads, in one-letter code: MAHHEVISRSGNAFLLNIRESVLLPGSMSEMHFFLLIGISSIHSDRVILAMKDYLVGGHSRKEVCEKYQMNNGYFSTTLGRLIRLNALAARLAPYYTDESSAFD.

It is found in the cytoplasm. Its function is as follows. May act as both positive and negative regulator of pap transcription. Might positively regulate levels of papI and/or mbf. Its autoregulatory mode of action involves differential binding to separate sites. In Escherichia coli, this protein is Major pilu subunit operon regulatory protein PapB (papB).